A 218-amino-acid chain; its full sequence is Response regulator UvrY (218 aa).

The Response regulatory domain maps to Asn3–Tyr119. Asp54 is modified (4-aspartylphosphate). The 66-residue stretch at Thr143 to Gly208 folds into the HTH luxR-type domain. Residues Val167–Tyr186 constitute a DNA-binding region (H-T-H motif).

Phosphorylated and activated by BarA.

It is found in the cytoplasm. In terms of biological role, member of the two-component regulatory system UvrY/BarA involved in the regulation of carbon metabolism via the CsrA/CsrB regulatory system. UvrY activates the transcription of the untranslated csrB RNA and of barA, in an autoregulatory loop. Mediates the effects of CsrA on csrB RNA by BarA-dependent and BarA-independent mechanisms. The sequence is that of Response regulator UvrY (uvrY) from Escherichia coli O157:H7.